A 154-amino-acid polypeptide reads, in one-letter code: Calmodulin-like protein 4 (154 aa).

EF-hand domains follow at residues Glu-7 to Glu-42, Pro-43 to Asp-78, Asp-80 to Lys-115, and Met-116 to Lys-151. Asp-20, Asn-22, Asp-24, Cys-26, Glu-31, Asp-56, Asp-58, Asn-60, Glu-67, Asp-93, Asp-95, Asn-97, and Glu-104 together coordinate Ca(2+). N6,N6,N6-trimethyllysine is present on Lys-115. 5 residues coordinate Ca(2+): Asp-129, Asp-131, Asp-133, Gln-135, and Glu-140.

The protein belongs to the calmodulin family.

Functionally, potential calcium sensor. The chain is Calmodulin-like protein 4 (CML4) from Oryza sativa subsp. japonica (Rice).